Reading from the N-terminus, the 260-residue chain is Small ribosomal subunit protein bS6 (260 aa).

This sequence belongs to the bacterial ribosomal protein bS6 family.

Its function is as follows. Binds together with bS18 to 16S ribosomal RNA. The sequence is that of Small ribosomal subunit protein bS6 from Wolbachia sp. subsp. Brugia malayi (strain TRS).